The following is a 298-amino-acid chain: Epimerase family protein SSP1921 (298 aa).

The protein belongs to the NAD(P)-dependent epimerase/dehydratase family. SDR39U1 subfamily.

This Staphylococcus saprophyticus subsp. saprophyticus (strain ATCC 15305 / DSM 20229 / NCIMB 8711 / NCTC 7292 / S-41) protein is Epimerase family protein SSP1921.